Here is a 193-residue protein sequence, read N- to C-terminus: Naphthalene 1,2-dioxygenase system, small oxygenase component (193 aa).

It belongs to the bacterial ring-hydroxylating dioxygenase beta subunit family. As to quaternary structure, the naphthalene dioxygenase (NDO) multicomponent enzyme system is composed of an electron transfer component and a dioxygenase component (iron sulfur protein (ISP)). The electron transfer component is composed of a ferredoxin reductase (NdoR) and a ferredoxin (NdoA), and the dioxygenase component is formed of a heterohexamer (trimer of heterodimers) of three large alpha subunits (NdoB) and three small beta subunits (NdoC).

Its pathway is aromatic compound metabolism; naphthalene degradation. In terms of biological role, component of the naphthalene dioxygenase (NDO) multicomponent enzyme system which catalyzes the incorporation of both atoms of molecular oxygen into naphthalene to form cis-(1R,2S)-dihydroxy-1,2-dihydronaphthalene. The beta subunit seems to have a structural role in the holoenzyme. This is Naphthalene 1,2-dioxygenase system, small oxygenase component from Pseudomonas aeruginosa.